We begin with the raw amino-acid sequence, 175 residues long: Hypoxanthine-guanine phosphoribosyltransferase (175 aa).

Positions 40 and 41 each coordinate diphosphate. The Mg(2+) site is built by E96 and D97. Residue D100 is the Proton acceptor of the active site. Residues K128, 149–150, and D156 contribute to the GMP site; that span reads FL. R162 is a binding site for diphosphate.

It belongs to the purine/pyrimidine phosphoribosyltransferase family. Mg(2+) is required as a cofactor.

The protein localises to the cytoplasm. It catalyses the reaction IMP + diphosphate = hypoxanthine + 5-phospho-alpha-D-ribose 1-diphosphate. The enzyme catalyses GMP + diphosphate = guanine + 5-phospho-alpha-D-ribose 1-diphosphate. The protein operates within purine metabolism; IMP biosynthesis via salvage pathway; IMP from hypoxanthine: step 1/1. It participates in purine metabolism; GMP biosynthesis via salvage pathway; GMP from guanine: step 1/1. Purine salvage pathway enzyme that catalyzes the transfer of the ribosyl-5-phosphate group from 5-phospho-alpha-D-ribose 1-diphosphate (PRPP) to the N9 position of the 6-oxopurines hypoxanthine and guanine to form the corresponding ribonucleotides IMP (inosine 5'-monophosphate) and GMP (guanosine 5'-monophosphate), with the release of PPi. This chain is Hypoxanthine-guanine phosphoribosyltransferase (hpt), found in Mycoplasma pneumoniae (strain ATCC 29342 / M129 / Subtype 1) (Mycoplasmoides pneumoniae).